A 951-amino-acid chain; its full sequence is Serine/threonine-protein kinase 10 (951 aa).

The 259-residue stretch at Trp36–Val294 folds into the Protein kinase domain. ATP contacts are provided by residues Leu42–Val50 and Lys65. Asp157 (proton acceptor) is an active-site residue. Residues Glu319 to Ser330 show a composition bias toward acidic residues. The segment at Glu319–Ser479 is disordered. A compositionally biased stretch (polar residues) spans Asp331–Ala343. Positions Gly345–Val356 are enriched in basic and acidic residues. Over residues Pro364–Ile373 the composition is skewed to polar residues. 2 stretches are compositionally biased toward basic and acidic residues: residues His374 to Val394 and His410 to Gly427. The segment covering Ala429–Arg443 has biased composition (polar residues). Phosphoserine; by PLK1 is present on residues Ser483, Ser487, and Ser491. Residues Glu583–Arg723 are a coiled coil. The span at Gln785 to Thr800 shows a compositional bias: basic and acidic residues. A disordered region spans residues Gln785–Met804. The stretch at Arg898 to Glu928 forms a coiled coil. Positions Ala930–Ser951 are disordered.

This sequence belongs to the protein kinase superfamily. STE Ser/Thr protein kinase family. STE20 subfamily. Homodimer. In terms of processing, autophosphorylates. Phosphorylated by plk1/plx1, suggesting the existence of a feedback loop with plk1/plx1. activation of the protein.

It is found in the cell membrane. It catalyses the reaction L-seryl-[protein] + ATP = O-phospho-L-seryl-[protein] + ADP + H(+). It carries out the reaction L-threonyl-[protein] + ATP = O-phospho-L-threonyl-[protein] + ADP + H(+). Functionally, may act as a polo kinase kinase by mediating phosphorylation of plk1/plx1 and subsequent activation of plk1/plx1 during oocyte maturation. In Xenopus tropicalis (Western clawed frog), this protein is Serine/threonine-protein kinase 10 (stk10).